A 161-amino-acid polypeptide reads, in one-letter code: Thy-1 membrane glycoprotein (161 aa).

Positions 1-19 are cleaved as a signal peptide; the sequence is MNPVISITLLLSVLQMSRG. Gln-20 carries the pyrrolidone carboxylic acid modification. The region spanning 20-126 is the Ig-like V-type domain; the sequence is QRVISLTACL…NKTINVIRDK (107 aa). Cystine bridges form between Cys-28–Cys-130 and Cys-38–Cys-104. A glycan (N-linked (GlcNAc...) (complex) asparagine; alternate) is linked at Asn-42. An N-linked (GlcNAc...) (high mannose) asparagine; alternate glycan is attached at Asn-42. An N-linked (GlcNAc...) asparagine; alternate glycan is attached at Asn-42. At Ser-82 the chain carries Phosphoserine. N-linked (GlcNAc...) (complex) asparagine; alternate glycosylation is present at Asn-93. The N-linked (GlcNAc...) asparagine; alternate glycan is linked to Asn-93. A glycan (N-linked (GlcNAc...) (high mannose) asparagine; in brain; alternate) is linked at Asn-117. A glycan (N-linked (GlcNAc...) (hybrid) asparagine; in brain; alternate) is linked at Asn-117. Residue Cys-130 is the site of GPI-anchor amidated cysteine attachment. A propeptide spans 131-161 (removed in mature form); that stretch reads GGISLLVQNTSWLLLLLLSLSFLQATDFISL.

Glycosylation is tissue specific. Sialylation of N-glycans at Asn-93 in brain and at Asn-42, Asn-93 and Asn-117 in thymus. Abundant in lymphoid tissues.

The protein resides in the cell membrane. In terms of biological role, may play a role in cell-cell or cell-ligand interactions during synaptogenesis and other events in the brain. This is Thy-1 membrane glycoprotein (Thy1) from Rattus norvegicus (Rat).